The chain runs to 660 residues: Protein SCARECROW 2 (660 aa).

2 disordered regions span residues 1–33 and 190–286; these read MGSS…ITSL and SDPA…KQRD. Residues 192–229 show a composition bias toward pro residues; the sequence is PAPPPPPPSHPALLPPDATAPPPPPTSVAALPPPPPAQ. The segment covering 259 to 272 has biased composition (low complexity); sequence AAAAAAAAAAAAAA. The stretch at 262-289 forms a coiled coil; sequence AAAAAAAAAAAAKERKEEQRRKQRDEEG. The span at 273–286 shows a compositional bias: basic and acidic residues; sequence AKERKEEQRRKQRD. Residues 283-653 enclose the GRAS domain; that stretch reads KQRDEEGLHL…LCLLTASAWR (371 aa). A leucine repeat I (LRI) region spans residues 290–354; it reads LHLLTLLLQC…VSSCLGLYAP (65 aa). The short motif at 297–301 is the LxCxE motif element; it reads LQCAE. The segment at 373 to 438 is VHIID; that stretch reads FQVFNGISPF…GGPPRVRLTG (66 aa). Positions 404–408 match the VHIID motif; it reads VHIID. A leucine repeat II (LRII) region spans residues 448-480; that stretch reads ATGKRLSDFADTLGLPFEFCPVADKAGNLDPEK. Residues 489-576 form a PFYRE region; the sequence is VAVHWLRHSL…QQLLSREIRN (88 aa). An SAW region spans residues 579-653; the sequence is AVGGPARTGD…LCLLTASAWR (75 aa).

It belongs to the GRAS family.

The protein localises to the cytoplasm. In terms of biological role, probable transcription factor involved in asmmetric cell division in the cortex/endodermis progenitor cell and in the process of stomata and ligule formation in leaves. In Oryza sativa subsp. indica (Rice), this protein is Protein SCARECROW 2 (SCR2).